Here is a 259-residue protein sequence, read N- to C-terminus: Ribosomal RNA large subunit methyltransferase E (259 aa).

G58, W60, D78, D96, and D120 together coordinate S-adenosyl-L-methionine. Catalysis depends on K160, which acts as the Proton acceptor.

The protein belongs to the class I-like SAM-binding methyltransferase superfamily. RNA methyltransferase RlmE family.

It localises to the cytoplasm. The enzyme catalyses uridine(2552) in 23S rRNA + S-adenosyl-L-methionine = 2'-O-methyluridine(2552) in 23S rRNA + S-adenosyl-L-homocysteine + H(+). Specifically methylates the uridine in position 2552 of 23S rRNA at the 2'-O position of the ribose in the fully assembled 50S ribosomal subunit. The chain is Ribosomal RNA large subunit methyltransferase E from Methanococcus vannielii (strain ATCC 35089 / DSM 1224 / JCM 13029 / OCM 148 / SB).